The primary structure comprises 356 residues: Tyrosine recombinase XerS (356 aa).

The 106-residue stretch at 16–121 folds into the Core-binding (CB) domain; sequence LMPWYVLEYY…ALSSLYKYLT (106 aa). The 186-residue stretch at 169-354 folds into the Tyr recombinase domain; that stretch reads GFLTYIDQEH…VNDEQKNALD (186 aa). Residues R210, K234, H306, R309, and H332 contribute to the active site. Y341 (O-(3'-phospho-DNA)-tyrosine intermediate) is an active-site residue.

It belongs to the 'phage' integrase family. XerS subfamily.

Its subcellular location is the cytoplasm. Its activity is regulated as follows. FtsK is required for recombination. Functionally, site-specific tyrosine recombinase, which acts by catalyzing the cutting and rejoining of the recombining DNA molecules. Essential to convert dimers of the bacterial chromosome into monomers to permit their segregation at cell division. In Streptococcus pneumoniae serotype 2 (strain D39 / NCTC 7466), this protein is Tyrosine recombinase XerS.